The sequence spans 223 residues: Ribose-5-phosphate isomerase A (223 aa).

Substrate is bound by residues 29-32 (TGST), 82-85 (DGAD), and 95-98 (KGGG). The active-site Proton acceptor is Glu104. Lys122 provides a ligand contact to substrate.

It belongs to the ribose 5-phosphate isomerase family. As to quaternary structure, homodimer.

The enzyme catalyses aldehydo-D-ribose 5-phosphate = D-ribulose 5-phosphate. It participates in carbohydrate degradation; pentose phosphate pathway; D-ribose 5-phosphate from D-ribulose 5-phosphate (non-oxidative stage): step 1/1. Its function is as follows. Catalyzes the reversible conversion of ribose-5-phosphate to ribulose 5-phosphate. This Neisseria gonorrhoeae (strain ATCC 700825 / FA 1090) protein is Ribose-5-phosphate isomerase A.